A 414-amino-acid chain; its full sequence is Esterase FrsA (414 aa).

It belongs to the FrsA family.

It carries out the reaction a carboxylic ester + H2O = an alcohol + a carboxylate + H(+). Its function is as follows. Catalyzes the hydrolysis of esters. This chain is Esterase FrsA, found in Escherichia coli O17:K52:H18 (strain UMN026 / ExPEC).